The chain runs to 302 residues: Homoserine O-acetyltransferase (302 aa).

Cysteine 142 functions as the Acyl-thioester intermediate in the catalytic mechanism. The substrate site is built by lysine 163 and serine 192. Histidine 235 acts as the Proton acceptor in catalysis. The active site involves glutamate 237. Position 249 (arginine 249) interacts with substrate.

It belongs to the MetA family.

It localises to the cytoplasm. It catalyses the reaction L-homoserine + acetyl-CoA = O-acetyl-L-homoserine + CoA. The protein operates within amino-acid biosynthesis; L-methionine biosynthesis via de novo pathway; O-acetyl-L-homoserine from L-homoserine: step 1/1. Its function is as follows. Transfers an acetyl group from acetyl-CoA to L-homoserine, forming acetyl-L-homoserine. The chain is Homoserine O-acetyltransferase from Bacillus pumilus (strain SAFR-032).